Reading from the N-terminus, the 139-residue chain is Large ribosomal subunit protein uL16 (139 aa).

The protein belongs to the universal ribosomal protein uL16 family. As to quaternary structure, part of the 50S ribosomal subunit.

In terms of biological role, binds 23S rRNA and is also seen to make contacts with the A and possibly P site tRNAs. The polypeptide is Large ribosomal subunit protein uL16 (Chlorobium phaeobacteroides (strain DSM 266 / SMG 266 / 2430)).